The primary structure comprises 309 residues: Glycine-rich RNA-binding protein 3, mitochondrial (309 aa).

The transit peptide at 1–37 directs the protein to the mitochondrion; sequence MAFLSKFGNILKQTTNKQLNAQVSLSSPSLFQAIRCM. The 79-residue stretch at 40–118 folds into the RRM domain; that stretch reads SKLFIGGMAY…RVVKVNYAND (79 aa). The interval 247 to 309 is disordered; the sequence is FAGDSQFGGS…GEFEDVAKRA (63 aa). The segment covering 258 to 273 has biased composition (polar residues); the sequence is VGNSSQFGGDNTQFTA.

The protein belongs to the GR-RBP family. Homodimer. Interacts with ORRM2 and MORF8/RIP1. Interacts with RBG5/ORRM4. Binds to RBG2/ORRM5.

The protein localises to the mitochondrion. Functionally, possibly has a role in RNA transcription or processing during stress. Involved in C-to-U editing of mitochondrial RNA. Functions as a minor mitochondrial editing factor. Controls 6 percent of the mitochondrial editing sites. In Arabidopsis thaliana (Mouse-ear cress), this protein is Glycine-rich RNA-binding protein 3, mitochondrial.